A 130-amino-acid polypeptide reads, in one-letter code: Acyl carrier protein 2, chloroplastic (130 aa).

A chloroplast-targeting transit peptide spans 1 to 48 (MASITGSSVSFKCAPLQSSFNSKNYALKSSVTFWRRTPVMPRGLSVSC). Residues 52–127 (PEMVTKVSDI…EAADMIEALQ (76 aa)) enclose the Carrier domain. O-(pantetheine 4'-phosphoryl)serine is present on serine 87.

This sequence belongs to the acyl carrier protein (ACP) family. 4'-phosphopantetheine is transferred from CoA to a specific serine of apo-ACP by acpS. This modification is essential for activity because fatty acids are bound in thioester linkage to the sulfhydryl of the prosthetic group. As to expression, roots, leaves and seeds.

The protein resides in the plastid. It localises to the chloroplast. Its pathway is lipid metabolism; fatty acid biosynthesis. In terms of biological role, carrier of the growing fatty acid chain in fatty acid biosynthesis. This chain is Acyl carrier protein 2, chloroplastic (ACL1.2), found in Spinacia oleracea (Spinach).